Here is a 232-residue protein sequence, read N- to C-terminus: MKKQQFIDMQEQGTSTIPNLLLTHYKQLGLNETELILLLKIKMHLEKGSYFPTPNQLQEGMSISVEECTNRLRMFIQKGFLFIEECEDQNGIKFEKYSLQPLWGKLYEYIQLAQNQTQERKAEGEQKSLYTIFEEEFARPLSPLECETLAIWQDQDQHDAQLIKHALKEAVLSGKLSFRYIDRILFEWKKNGLKTVEQAKIHSQKFRRVQAKQNEPQKEYKRQVPFYNWLEQ.

The interval 1 to 98 (MKKQQFIDMQ…QNGIKFEKYS (98 aa)) is N-terminal domain. Positions 1–116 (MKKQQFIDMQ…YEYIQLAQNQ (116 aa)) are DDBH1. The C-terminal domain stretch occupies residues 99–205 (LQPLWGKLYE…VEQAKIHSQK (107 aa)). The interval 131-200 (TIFEEEFARP…NGLKTVEQAK (70 aa)) is DDBH2. Residues 206–232 (FRRVQAKQNEPQKEYKRQVPFYNWLEQ) are C-terminal tail.

The protein belongs to the DnaB/DnaD family. As to quaternary structure, the DNA replisome assembles sequentially on oriC in this order; DnaA, DnaD, DnaB, DnaI-DnaC helicase. Homodimer. Homotetramer. Oligomerization in vitro is concentration dependent. Part of the replication restart primosome which assembles in this order; PriA, DnaD then DnaB. The preferred DNA substrate mimics an arrested DNA replication fork with unreplicated lagging strand. Interacts with DnaA, DnaB and PriA. Interaction with DnaB requires DnaD to dimerize.

The protein resides in the cytoplasm. With respect to regulation, recruitment to oriC requires DnaA but not DnaB, DnaC or DnaI and is blocked by SirA. Required to load replicative helicase DnaC onto replication forks. Binds to a DnaD recognition element (DRE) which has pairs of 5'-TnnT-3' motifs; there is a strong DRE at oriC opposite the DnaA-trios recognized by DnaA. During DNA replication from the origin of replication (oriC) in the DNA replisome, DnaD is required after DnaA, before DnaB and subsequent helicase DnaC loading. A component of the replication restart primosome, which reloads the replicative helicase on sites other than oriC. DnaB, DnaD and DnaI may also be required for a PriA-independent pathway of replication fork restart. DnaB and DnaD work together to allow DnaB access to single-stranded (ss)DNA. Has DNA remodeling activity that converts supercoiled plasmid into an open circular form; DnaD forms scaffolds inside the plasmid DNA. Plasmid relaxation incorporates both wrapping around the DnaD protein scaffold and simultaneous untwisting, no nicking of the DNA is seen. Also converts linear DNA into an open circular form. Disrupts a replicative helicase-DnaI complex. Inhibits the ability of DnaA-ATP to form a helix on DNA; does not disassemble preformed helices in vitro. Binds ssDNA, and replication fork-like substrates, supercoiled plasmid, but not stably to short double-stranded (ds)DNA. DnaD stimulates DnaB DNA-binding activities. DnaB and DnaD are required to load helicase on the repN plasmid origin of replication (oriN). Causes a severe growth defect upon overexpression even in an oriC-independent strain. The chain is Replicative helicase loading/DNA remodeling protein DnaD from Bacillus subtilis (strain 168).